The following is a 201-amino-acid chain: Cell division protein SepF (201 aa).

The segment at 1–94 (MALKDLFSGF…TTSKNNARNV (94 aa)) is disordered. Acidic residues predominate over residues 13-28 (VEEEDDELEAPPEENE). Over residues 35 to 44 (PKQQAQSQNQ) the composition is skewed to low complexity. Residues 59 to 88 (SIQSVPKKQSTRLQQSSGERKYQMNNTTSK) are compositionally biased toward polar residues.

Belongs to the SepF family. Homodimer. Interacts with FtsZ.

It is found in the cytoplasm. In terms of biological role, cell division protein that is part of the divisome complex and is recruited early to the Z-ring. Probably stimulates Z-ring formation, perhaps through the cross-linking of FtsZ protofilaments. Its function overlaps with FtsA. The chain is Cell division protein SepF from Staphylococcus saprophyticus subsp. saprophyticus (strain ATCC 15305 / DSM 20229 / NCIMB 8711 / NCTC 7292 / S-41).